The sequence spans 357 residues: Sorbitol dehydrogenase (357 aa).

Ala-2 carries the post-translational modification N-acetylalanine. Cys-45 provides a ligand contact to Zn(2+). Tyr-51 lines the substrate pocket. 3 residues coordinate Zn(2+): His-70, Glu-71, and Glu-156. Residue Glu-156 coordinates substrate. At Ser-169 the chain carries Phosphoserine. NAD(+) is bound by residues Ile-184, Asp-204, Arg-209, 273 to 275 (VGM), and 297 to 299 (VFR). Substrate contacts are provided by Arg-299 and Tyr-300.

It belongs to the zinc-containing alcohol dehydrogenase family. As to quaternary structure, homotetramer; dimer of dimers. The cofactor is Zn(2+). Expressed in liver and testis.

The protein resides in the mitochondrion membrane. Its subcellular location is the cell projection. The protein localises to the cilium. It is found in the flagellum. It carries out the reaction keto-D-fructose + NADH + H(+) = D-sorbitol + NAD(+). It catalyses the reaction xylitol + NAD(+) = D-xylulose + NADH + H(+). The enzyme catalyses L-iditol + NAD(+) = keto-L-sorbose + NADH + H(+). Functionally, polyol dehydrogenase that catalyzes the reversible NAD(+)-dependent oxidation of various sugar alcohols. Is active with D-sorbitol (D-glucitol) leading to the C2-oxidized product D-fructose. Is a key enzyme in the polyol pathway that interconverts glucose and fructose via sorbitol, which constitutes an important alternate route for glucose metabolism. May play a role in sperm motility by using sorbitol as an alternative energy source for sperm motility. This Rattus norvegicus (Rat) protein is Sorbitol dehydrogenase (Sord).